The chain runs to 568 residues: MKVSRQQYADLYGPTVGDRVRLGDTELLIEVERDLTTYGEEVKFGGGKVIRDGLGQSSAATRDDANVPDLVITNALILDYWGVIKADVGVKNGRISAIGKAGNPGTQDGVTPGLTIAASTEIVAGEGLVLTAGGVDTHIHFIAPQQCWTALESGVTTMIGGGTGPTAGTSATTCTPGQWHIHRMLESLAGLPLNFGLLGKGNASTQPPLAEQIRAGALGLKLHEDWGTTPAAIHAALSVAEDYDVQVAIHTDTLNESGFVEDAIRAFAGRTIHTFHTEGAGGGHAPDIIRVAGLPNVLPSSTNPTMPFTVNTIHEHLDMLMVCHHLSPRIPEDVHFAESRIRPETIAAEDVLHDLGVFSMMSSDSQAMGRVGEVITRTWQAAHKMKVQRGPLAPDGRADNFRARRYVAKYTINPAIAHGISHEVGSVEVGKLADLVLWSPAFFGAKPSLILKGGLVVAAQMGDANASIPTPQPVYPRPMFAAYGGCPDATCLHFVSQAGLEGGHLPDVGRRYSAVKHTRDIGKKDMQLNAETPDIQVNPETYEVRVNGELVTCEPVDELPLAQKYFLF.

The region spanning 133-568 (GGVDTHIHFI…LPLAQKYFLF (436 aa)) is the Urease domain. Residues His-138, His-140, and Lys-221 each contribute to the Ni(2+) site. At Lys-221 the chain carries N6-carboxylysine. His-223 contributes to the substrate binding site. Ni(2+) contacts are provided by His-250 and His-276. His-324 (proton donor) is an active-site residue. Residue Asp-364 participates in Ni(2+) binding.

The protein belongs to the metallo-dependent hydrolases superfamily. Urease alpha subunit family. Heterohexamer of 3 UreC (alpha) and 3 UreAB (gamma/beta) subunits. Requires Ni cation as cofactor. Post-translationally, carboxylation allows a single lysine to coordinate two nickel ions.

The protein localises to the cytoplasm. It catalyses the reaction urea + 2 H2O + H(+) = hydrogencarbonate + 2 NH4(+). The protein operates within nitrogen metabolism; urea degradation; CO(2) and NH(3) from urea (urease route): step 1/1. The protein is Urease subunit alpha of Deinococcus radiodurans (strain ATCC 13939 / DSM 20539 / JCM 16871 / CCUG 27074 / LMG 4051 / NBRC 15346 / NCIMB 9279 / VKM B-1422 / R1).